The chain runs to 308 residues: Ribosomal RNA small subunit methyltransferase H (308 aa).

S-adenosyl-L-methionine-binding positions include 36–38 (GGH), Asp55, Phe86, Asp103, and Gln110.

This sequence belongs to the methyltransferase superfamily. RsmH family.

It localises to the cytoplasm. The catalysed reaction is cytidine(1402) in 16S rRNA + S-adenosyl-L-methionine = N(4)-methylcytidine(1402) in 16S rRNA + S-adenosyl-L-homocysteine + H(+). Specifically methylates the N4 position of cytidine in position 1402 (C1402) of 16S rRNA. The sequence is that of Ribosomal RNA small subunit methyltransferase H from Helicobacter pylori (strain Shi470).